The chain runs to 488 residues: Glutamyl-tRNA(Gln) amidotransferase subunit A (488 aa).

Active-site charge relay system residues include K79 and S159. S183 serves as the catalytic Acyl-ester intermediate.

Belongs to the amidase family. GatA subfamily. Heterotrimer of A, B and C subunits.

It catalyses the reaction L-glutamyl-tRNA(Gln) + L-glutamine + ATP + H2O = L-glutaminyl-tRNA(Gln) + L-glutamate + ADP + phosphate + H(+). Allows the formation of correctly charged Gln-tRNA(Gln) through the transamidation of misacylated Glu-tRNA(Gln) in organisms which lack glutaminyl-tRNA synthetase. The reaction takes place in the presence of glutamine and ATP through an activated gamma-phospho-Glu-tRNA(Gln). This is Glutamyl-tRNA(Gln) amidotransferase subunit A from Wolbachia pipientis subsp. Culex pipiens (strain wPip).